Reading from the N-terminus, the 192-residue chain is Iodate reductase subunit IdrB (192 aa).

The tat-type signal signal peptide spans 1–52 (MSENIIPVRAVPAHDHEHDGERACMSRRRFLLFGGTSVALLSIASLPGVAQV). Residues 102–173 (GADKDIVAFN…LEVQGDDIYA (72 aa)) form the Rieske domain. 4 residues coordinate [2Fe-2S] cluster: C114, H116, C135, and H138.

Belongs to the AOX family. The iodate reductase (Idr) complex is composed of a molybdopterin-dependent iodate reductase (IdrA and IdrB subunits) and two associated peroxidases (IdrP1 and IdrP2). [2Fe-2S] cluster serves as cofactor. In terms of processing, predicted to be exported by the Tat system. The position of the signal peptide cleavage has not been experimentally proven.

The protein resides in the periplasm. Involved in iodate respiration. Probably catalyzes the reduction of iodate (IO(3)(-)) to hypoiodous acid (HIO) and H(2)O(2), using a reduced cytochrome c as the electron donor. The protein is Iodate reductase subunit IdrB of Pseudomonas sp. (strain SCT).